Consider the following 237-residue polypeptide: MPYEKHVEQTVVEKTEQPGHSSTHHAPAQRTVAREQEEVVHKEFTHTDIRVPHIDAPPPIIAASAVGLAEEIVSHGFQASAARISGASTEVDMRPSPKLAEEARRDAERYQKEHEMINRQAEATLQKKAEEYRHQTEAEAEKIRRELEKQHERDIQFRKDLIDQTIEKQKREVDLEAKMAKRELDREAQLAKEALERSRMATNVEVTLDTAAGHTVSGGTTVSSVDKVETVRERKHH.

2 stretches are compositionally biased toward basic and acidic residues: residues 1-17 (MPYE…KTEQ) and 91-105 (VDMR…EARR). Disordered regions lie at residues 1-35 (MPYE…VARE) and 85-105 (SGAS…EARR). Positions 98–201 (KLAEEARRDA…KEALERSRMA (104 aa)) form a coiled coil. CAHS motif stretches follow at residues 132–150 (YRHQ…LEKQ) and 169–187 (QKRE…LDRE). The disordered stretch occupies residues 212–237 (AGHTVSGGTTVSSVDKVETVRERKHH). A compositionally biased stretch (basic and acidic residues) spans 226–237 (DKVETVRERKHH).

This sequence belongs to the Cytosolic-abundant heat soluble protein (CAHS) family.

Its subcellular location is the cytoplasm. It localises to the nucleus. CAHS proteins are cytosolic heat soluble proteins that seem to contribute to the anhydrobiosis in tardigrades, but their specific mechanisms are yet to be identified. It is possible that protection during anhydrobiosis might occur via the stabilization of vitrifying small molecules such as sugars, but not via the direct glass transition of CAHS proteins themselves. This Ramazzottius varieornatus (Water bear) protein is Cytosolic-abundant heat soluble protein 1.